A 127-amino-acid chain; its full sequence is Biogenesis of lysosome-related organelles complex 1 subunit 2 (127 aa).

This sequence belongs to the BLOC1S2 family. Component of the biogenesis of lysosome-related organelles complex-1 (BLOC-1). Interacts with BLOS1 and SNX1.

Its subcellular location is the cytoplasm. The protein localises to the endosome. Its function is as follows. Component of the biogenesis of lysosome-related organelles complex-1 (BLOC-1), a complex that mediates the vacuolar degradative transport via the intracellular vesicle trafficking from the endosome to the vacuole. The chain is Biogenesis of lysosome-related organelles complex 1 subunit 2 (BLOS2) from Arabidopsis thaliana (Mouse-ear cress).